An 85-amino-acid polypeptide reads, in one-letter code: N.vectensis toxin 1 5 (85 aa).

The signal sequence occupies residues 1–20 (MASFKIVIVCLALLVAVACA). The propeptide occupies 21–36 (RRRDMMSDDELDFHLS). Cystine bridges form between Cys42-Cys82, Cys44-Cys72, and Cys65-Cys83.

Belongs to the sea anemone sodium channel inhibitory toxin family. Type II subfamily. Expressed in ectodermal glands and in clumps outside of the extodermal layer. Is not expressed in nematocytes. In adult female tissues, shows similar expression levels in mesenteries (gametes-producing tissue), tentacles, pharynx and physa.

The protein resides in the secreted. Functionally, binds to site 3 of voltage-gated sodium channels and inhibits the inactivation process. Is highly active on DmNav1/TipE (drosophila) and is only extremely weakly active on rat Nav1.4-beta-1/SCN4A-SCN1B, and on human Nav1.5-beta-1/SCN5A-beta-1. This reveals high specificity for arthropod over mammalian channels. In vivo, when released into the medium, this recombinant toxin induces impaired swimming, paralysis and death of the crustacean A.nauplii within several hours. Also causes paralysis of cherry shrimps immediately after injection at very low doses. Its effect on zebrafish (D.rerio) larvae is also rapid, since it induces tail twitching accompanied by impaired swimming after 20 minutes and complete paralysis within 45 minutes. It has also been observed to cause death of zebrafish larvae within 1 hour. This is N.vectensis toxin 1 5 from Nematostella vectensis (Starlet sea anemone).